A 269-amino-acid chain; its full sequence is MSISEKVTLGQYVPADSPVHSLDPRTKILSTLVLLFALFGVRDPRFFLGWGVLLAFIVFLSRVSLRTVLRSVRPVLWLLVFTVLLHALFTPGEAILRFHFIKVSREGLHMAALMGVRLVLLVAFAGLLTLTTSPMELADGMESLMSPLARVRFPAHEMAMMMTIALRFIPTLLEETDRILKAQISRGADLEGGGVVKRLRAFVPVLVPLFLIVFQRAEDLALAMESRCYVGGVGRTRMRPLRWCLEDWVALGLMSVSVAGLLFLERAVG.

A run of 6 helical transmembrane segments spans residues 45 to 65 (RFFLGWGVLLAFIVFLSRVSL), 75 to 95 (VLWLLVFTVLLHALFTPGEAI), 110 to 130 (MAALMGVRLVLLVAFAGLLTL), 153 to 173 (FPAHEMAMMMTIALRFIPTLL), 202 to 222 (FVPVLVPLFLIVFQRAEDLAL), and 244 to 264 (CLEDWVALGLMSVSVAGLLFL).

It belongs to the energy-coupling factor EcfT family. Forms a stable energy-coupling factor (ECF) transporter complex composed of 2 membrane-embedded substrate-binding proteins (S component), 2 ATP-binding proteins (A component) and 2 transmembrane proteins (T component). May be able to interact with more than 1 S component at a time.

It is found in the cell membrane. In terms of biological role, transmembrane (T) component of an energy-coupling factor (ECF) ABC-transporter complex. Unlike classic ABC transporters this ECF transporter provides the energy necessary to transport a number of different substrates. This chain is Energy-coupling factor transporter transmembrane protein EcfT, found in Thermanaerovibrio acidaminovorans (strain ATCC 49978 / DSM 6589 / Su883) (Selenomonas acidaminovorans).